Here is a 265-residue protein sequence, read N- to C-terminus: Small ribosomal subunit protein uS3 (265 aa).

The KH type-2 domain occupies 39 to 111 (IREFLNENFS…EVILNIIEVR (73 aa)). A disordered region spans residues 224 to 250 (FEAGNQRRGQKRRPRNDQPVKDLNKEK). The segment covering 238–250 (RNDQPVKDLNKEK) has biased composition (basic and acidic residues).

This sequence belongs to the universal ribosomal protein uS3 family. In terms of assembly, part of the 30S ribosomal subunit. Forms a tight complex with proteins S10 and S14.

Binds the lower part of the 30S subunit head. Binds mRNA in the 70S ribosome, positioning it for translation. The polypeptide is Small ribosomal subunit protein uS3 (Acholeplasma laidlawii).